A 340-amino-acid polypeptide reads, in one-letter code: Protein-tyrosine-phosphatase PTP1 (340 aa).

Residues 58–326 (IAHEFTGLQA…FFCYNAIVDE (269 aa)) enclose the Tyrosine-protein phosphatase domain. Substrate is bound by residues Asp-234, 265–271 (CSAGIGR), and Gln-311. Cys-265 serves as the catalytic Phosphocysteine intermediate.

In terms of assembly, interacts with MPK6. Interacts with KIN10. In terms of processing, phosphorylated by KIN10. In terms of tissue distribution, expressed in roots, stems and flowers, and at low levels in leaves.

It is found in the cytoplasm. Its subcellular location is the cytosol. The protein resides in the nucleus. The enzyme catalyses O-phospho-L-tyrosyl-[protein] + H2O = L-tyrosyl-[protein] + phosphate. Inhibited by hydrogen peroxide. In terms of biological role, protein-tyrosine-phosphatase that dephosphorylates and probably inhibits MPK6 in non-oxidative stress conditions. In association with MKP1, represses salicylic acid (SA) and camalexin biosynthesis, thus modulating defense response. May also repress MPK3. Dephosphorylates and inactivates MPK4 in vitro. This is Protein-tyrosine-phosphatase PTP1 (PTP1) from Arabidopsis thaliana (Mouse-ear cress).